The sequence spans 578 residues: Putative diflavin flavoprotein A 2 (578 aa).

Residues 48–240 (RHGTTYNSFL…LQVVLVATGH (193 aa)) form a zinc metallo-hydrolase region. Positions 97, 99, 101, 164, 183, and 240 each coordinate Fe cation. One can recognise a Flavodoxin-like domain in the interval 269-406 (VALFYVDGYG…LCREAGTDLG (138 aa)). The tract at residues 429 to 578 (IGRLSTGLYI…THHRKLGNHY (150 aa)) is flavodoxin-reductase-like.

In the N-terminal section; belongs to the zinc metallo-hydrolase group 3 family. This sequence in the C-terminal section; belongs to the flavodoxin reductase family. The cofactor is Fe cation.

Functionally, mediates electron transfer from NADH to oxygen, reducing it to water. This modular protein has 3 redox cofactors, in other organisms the same activity requires 2 or 3 proteins. This Synechocystis sp. (strain ATCC 27184 / PCC 6803 / Kazusa) protein is Putative diflavin flavoprotein A 2 (dfa2).